We begin with the raw amino-acid sequence, 419 residues long: Pyrrolysine--tRNA ligase (419 aa).

The interval 100-157 is disordered; the sequence is APKVKKAMPKSVSRAPKPLENSVSAKASTNTSRSVPSPAKSTPNSSVPASAPAPSLTR. Over residues 120-141 the composition is skewed to polar residues; that stretch reads NSVSAKASTNTSRSVPSPAKST. Over residues 142 to 154 the composition is skewed to low complexity; the sequence is PNSSVPASAPAPS.

It belongs to the class-II aminoacyl-tRNA synthetase family.

It localises to the cytoplasm. The enzyme catalyses tRNA(Pyl) + L-pyrrolysine + ATP = L-pyrrolysyl-tRNA(Pyl) + AMP + diphosphate. Catalyzes the attachment of pyrrolysine to tRNA(Pyl). Pyrrolysine is a lysine derivative encoded by the termination codon UAG. The polypeptide is Pyrrolysine--tRNA ligase (pylS) (Methanosarcina barkeri).